We begin with the raw amino-acid sequence, 129 residues long: uncharacterized protein (129 aa).

An Isoglutamyl lysine isopeptide (Lys-Gln) (interchain with Q-Cter in protein Pup) cross-link involves residue Lys-121.

This is an uncharacterized protein from Mycolicibacterium smegmatis (strain ATCC 700084 / mc(2)155) (Mycobacterium smegmatis).